A 107-amino-acid chain; its full sequence is U1-lycotoxin-Ls1b (107 aa).

The first 20 residues, 1–20 (MMKVLVVVALLPTLISYSSS), serve as a signal peptide directing secretion. A propeptide spanning residues 21–41 (EGIDDLEADELLSLMANEQTR) is cleaved from the precursor. 4 disulfides stabilise this stretch: cysteine 44–cysteine 59, cysteine 51–cysteine 68, cysteine 58–cysteine 86, and cysteine 70–cysteine 84.

This sequence belongs to the neurotoxin 19 (CSTX) family. 04 (U1-Lctx) subfamily. In terms of tissue distribution, expressed by the venom gland.

It localises to the secreted. This chain is U1-lycotoxin-Ls1b, found in Lycosa singoriensis (Wolf spider).